We begin with the raw amino-acid sequence, 328 residues long: Phosphate acyltransferase (328 aa).

Belongs to the PlsX family. In terms of assembly, homodimer. Probably interacts with PlsY.

The protein localises to the cytoplasm. The catalysed reaction is a fatty acyl-[ACP] + phosphate = an acyl phosphate + holo-[ACP]. The protein operates within lipid metabolism; phospholipid metabolism. Catalyzes the reversible formation of acyl-phosphate (acyl-PO(4)) from acyl-[acyl-carrier-protein] (acyl-ACP). This enzyme utilizes acyl-ACP as fatty acyl donor, but not acyl-CoA. The chain is Phosphate acyltransferase from Staphylococcus haemolyticus (strain JCSC1435).